Reading from the N-terminus, the 502-residue chain is Glycerol kinase (502 aa).

Thr14 serves as a coordination point for ADP. 3 residues coordinate ATP: Thr14, Thr15, and Ser16. Thr14 lines the sn-glycerol 3-phosphate pocket. Arg18 contributes to the ADP binding site. 4 residues coordinate sn-glycerol 3-phosphate: Arg84, Glu85, Tyr136, and Asp246. 5 residues coordinate glycerol: Arg84, Glu85, Tyr136, Asp246, and Gln247. Positions 268 and 311 each coordinate ADP. ATP-binding residues include Thr268, Gly311, Gln315, and Gly412. Gly412 and Asn416 together coordinate ADP.

It belongs to the FGGY kinase family. Homotetramer and homodimer (in equilibrium). Heterodimer with EIIA-Glc. Binds 1 zinc ion per glycerol kinase EIIA-Glc dimer. The zinc ion is important for dimerization.

The enzyme catalyses glycerol + ATP = sn-glycerol 3-phosphate + ADP + H(+). The protein operates within polyol metabolism; glycerol degradation via glycerol kinase pathway; sn-glycerol 3-phosphate from glycerol: step 1/1. Its activity is regulated as follows. Activity of this regulatory enzyme is affected by several metabolites. Allosterically and non-competitively inhibited by fructose 1,6-bisphosphate (FBP) and unphosphorylated phosphocarrier protein EIIA-Glc (III-Glc), an integral component of the bacterial phosphotransferase (PTS) system. Key enzyme in the regulation of glycerol uptake and metabolism. Catalyzes the phosphorylation of glycerol to yield sn-glycerol 3-phosphate. The polypeptide is Glycerol kinase (Salmonella arizonae (strain ATCC BAA-731 / CDC346-86 / RSK2980)).